The primary structure comprises 196 residues: Probable malonic semialdehyde reductase RutE (196 aa).

It belongs to the nitroreductase family. HadB/RutE subfamily. FMN serves as cofactor.

It carries out the reaction 3-hydroxypropanoate + NADP(+) = 3-oxopropanoate + NADPH + H(+). In terms of biological role, may reduce toxic product malonic semialdehyde to 3-hydroxypropionic acid, which is excreted. This Klebsiella pneumoniae subsp. pneumoniae (strain ATCC 700721 / MGH 78578) protein is Probable malonic semialdehyde reductase RutE.